We begin with the raw amino-acid sequence, 513 residues long: Maturase K (513 aa).

It belongs to the intron maturase 2 family. MatK subfamily.

It is found in the plastid. Its subcellular location is the chloroplast. Its function is as follows. Usually encoded in the trnK tRNA gene intron. Probably assists in splicing its own and other chloroplast group II introns. The chain is Maturase K from Keckiella cordifolia (Heart-leafed penstemon).